We begin with the raw amino-acid sequence, 509 residues long: 2-isopropylmalate synthase (509 aa).

The Pyruvate carboxyltransferase domain occupies 5 to 267; it reads IQIFDTTLRD…QTALNLEETK (263 aa). Residues D14, H202, H204, and N238 each contribute to the Mn(2+) site. The tract at residues 391 to 509 is regulatory domain; sequence KLETLQLQYV…AAENVEKVGN (119 aa).

This sequence belongs to the alpha-IPM synthase/homocitrate synthase family. LeuA type 1 subfamily. Homodimer. Requires Mn(2+) as cofactor.

The protein localises to the cytoplasm. It carries out the reaction 3-methyl-2-oxobutanoate + acetyl-CoA + H2O = (2S)-2-isopropylmalate + CoA + H(+). The protein operates within amino-acid biosynthesis; L-leucine biosynthesis; L-leucine from 3-methyl-2-oxobutanoate: step 1/4. In terms of biological role, catalyzes the condensation of the acetyl group of acetyl-CoA with 3-methyl-2-oxobutanoate (2-ketoisovalerate) to form 3-carboxy-3-hydroxy-4-methylpentanoate (2-isopropylmalate). The chain is 2-isopropylmalate synthase from Staphylococcus aureus (strain MRSA252).